Consider the following 557-residue polypeptide: Glutamine--tRNA ligase (557 aa).

The 'HIGH' region signature appears at 42–52 (PEPNGYLHIGH). ATP-binding positions include 43–45 (EPN) and 49–55 (HIGHAKS). L-glutamine contacts are provided by aspartate 75 and tyrosine 220. ATP is bound by residues threonine 239 and 270 to 271 (RL). A 'KMSKS' region motif is present at residues 277 to 281 (LTSKR).

It belongs to the class-I aminoacyl-tRNA synthetase family. Monomer.

It localises to the cytoplasm. The enzyme catalyses tRNA(Gln) + L-glutamine + ATP = L-glutaminyl-tRNA(Gln) + AMP + diphosphate. The chain is Glutamine--tRNA ligase from Haemophilus influenzae (strain 86-028NP).